Here is a 204-residue protein sequence, read N- to C-terminus: MSSILLLTSSPRAESLSTPIAADLAEKLKNQKPGSVVVRRDLAATPLPHIDDLFTGAIRKPAEARTAEEIAAVKTSDELVAELFAADTIVISTGLINFNIYSSLKTWIDNVARAGVTFKYTESGPVGLVTGKKVYVVLASGGVYSQGPAAPLNHAVPYLKSVLGFLGITDIETIYVEGLAFGPEAAEKAIGAAKSRVEEIALAA.

FMN-binding positions include serine 10 and 15–17; that span reads SLS.

Belongs to the azoreductase type 1 family. Homodimer. Requires FMN as cofactor.

It catalyses the reaction 2 a quinone + NADH + H(+) = 2 a 1,4-benzosemiquinone + NAD(+). The catalysed reaction is N,N-dimethyl-1,4-phenylenediamine + anthranilate + 2 NAD(+) = 2-(4-dimethylaminophenyl)diazenylbenzoate + 2 NADH + 2 H(+). Quinone reductase that provides resistance to thiol-specific stress caused by electrophilic quinones. Its function is as follows. Also exhibits azoreductase activity. Catalyzes the reductive cleavage of the azo bond in aromatic azo compounds to the corresponding amines. This is FMN-dependent NADH:quinone oxidoreductase 1 from Rhizobium etli (strain ATCC 51251 / DSM 11541 / JCM 21823 / NBRC 15573 / CFN 42).